Reading from the N-terminus, the 68-residue chain is Defensin gallicin (68 aa).

The N-terminal stretch at 1–16 is a signal peptide; that stretch reads MWIESDAGVAIDRHAR.

Post-translationally, contains 5 disulfide bonds. In terms of tissue distribution, expressed in hemolymph, gills, digestive gland, foot, adductor muscles and mantle.

Its subcellular location is the secreted. The protein localises to the target cell membrane. Functionally, shows antibacterial activity against numerous Gram-positive bacteria. It selectively inhibits peptidoglycan biosynthesis through complex formation with the cell wall precursor lipid II (1:1 molar ratio) thus inhibiting cell wall synthesis. This Mytilus galloprovincialis (Mediterranean mussel) protein is Defensin gallicin.